The chain runs to 332 residues: Anthranilate phosphoribosyltransferase (332 aa).

5-phospho-alpha-D-ribose 1-diphosphate is bound by residues glycine 79, 82–83 (GD), serine 87, 89–92 (NIST), 107–115 (KHGNRSVSS), and serine 119. Position 79 (glycine 79) interacts with anthranilate. A Mg(2+)-binding site is contributed by serine 91. Asparagine 110 is a binding site for anthranilate. Arginine 165 is a binding site for anthranilate. Residues aspartate 223 and glutamate 224 each contribute to the Mg(2+) site.

This sequence belongs to the anthranilate phosphoribosyltransferase family. As to quaternary structure, homodimer. Mg(2+) serves as cofactor.

It catalyses the reaction N-(5-phospho-beta-D-ribosyl)anthranilate + diphosphate = 5-phospho-alpha-D-ribose 1-diphosphate + anthranilate. The protein operates within amino-acid biosynthesis; L-tryptophan biosynthesis; L-tryptophan from chorismate: step 2/5. In terms of biological role, catalyzes the transfer of the phosphoribosyl group of 5-phosphorylribose-1-pyrophosphate (PRPP) to anthranilate to yield N-(5'-phosphoribosyl)-anthranilate (PRA). This chain is Anthranilate phosphoribosyltransferase, found in Yersinia pestis bv. Antiqua (strain Antiqua).